Consider the following 434-residue polypeptide: Calcium uptake protein 2, mitochondrial (434 aa).

Residues 1 to 22 constitute a mitochondrion transit peptide; that stretch reads MAAAAGSCARVAAWGGKLRRGL. Residues 172-207 enclose the EF-hand 1 domain; it reads KPHSGFHVAFKMLDTDGNEMIEKREFFKLQKIISKQ. Ca(2+)-binding residues include D185, D187, N189, M191, E193, and E196. S205 is modified (phosphoserine). The region spanning 227-262 is the EF-hand 2; degenerate domain; that stretch reads EPEINTTLQMRFFGKRGQRKLHYKEFRRFMENLQTE. The region spanning 293–328 is the EF-hand 3; degenerate domain; it reads TENKDIYWKNVREKLSAGESISLDEFKSFCHFTTHL. In terms of domain architecture, EF-hand 4 spans 362-397; that stretch reads LSNNILDTVFKIFDLDGDECLSHEEFLGVLKNRMHR. Positions 375, 377, 379, 381, and 386 each coordinate Ca(2+).

The protein belongs to the MICU1 family. MICU2 subfamily. Heterodimer; disulfide-linked; heterodimerizes with MICU1. Component of the uniplex complex, composed of MCU, EMRE/SMDT1, MICU1 and MICU2 in a 4:4:1:1 stoichiometry.

The protein resides in the mitochondrion intermembrane space. Its subcellular location is the mitochondrion inner membrane. In terms of biological role, calcium sensor of the mitochondrial calcium uniporter (MCU) channel, which senses calcium level via its EF-hand domains. MICU1 and MICU2 form a disulfide-linked heterodimer that stimulates and inhibits MCU activity, depending on the concentration of calcium. At low calcium levels, MICU1 occludes the pore of the MCU channel, preventing mitochondrial calcium uptake. At higher calcium levels, calcium-binding to MICU1 and MICU2 induces a conformational change that weakens MCU-MICU1 interactions and moves the MICU1-MICU2 heterodimer away from the pore, allowing calcium permeation through the MCU channel. The chain is Calcium uptake protein 2, mitochondrial from Homo sapiens (Human).